We begin with the raw amino-acid sequence, 372 residues long: 4-hydroxy-3-methylbut-2-en-1-yl diphosphate synthase (flavodoxin) (372 aa).

[4Fe-4S] cluster contacts are provided by Cys270, Cys273, Cys305, and Glu312.

The protein belongs to the IspG family. It depends on [4Fe-4S] cluster as a cofactor.

It carries out the reaction (2E)-4-hydroxy-3-methylbut-2-enyl diphosphate + oxidized [flavodoxin] + H2O + 2 H(+) = 2-C-methyl-D-erythritol 2,4-cyclic diphosphate + reduced [flavodoxin]. Its pathway is isoprenoid biosynthesis; isopentenyl diphosphate biosynthesis via DXP pathway; isopentenyl diphosphate from 1-deoxy-D-xylulose 5-phosphate: step 5/6. In terms of biological role, converts 2C-methyl-D-erythritol 2,4-cyclodiphosphate (ME-2,4cPP) into 1-hydroxy-2-methyl-2-(E)-butenyl 4-diphosphate. The protein is 4-hydroxy-3-methylbut-2-en-1-yl diphosphate synthase (flavodoxin) of Salmonella schwarzengrund (strain CVM19633).